Consider the following 141-residue polypeptide: Nucleoside diphosphate kinase (141 aa).

Residues K11, F59, R87, T93, R104, and N114 each contribute to the ATP site. H117 acts as the Pros-phosphohistidine intermediate in catalysis.

It belongs to the NDK family. In terms of assembly, homotetramer. The cofactor is Mg(2+).

It localises to the cytoplasm. It carries out the reaction a 2'-deoxyribonucleoside 5'-diphosphate + ATP = a 2'-deoxyribonucleoside 5'-triphosphate + ADP. The catalysed reaction is a ribonucleoside 5'-diphosphate + ATP = a ribonucleoside 5'-triphosphate + ADP. Its function is as follows. Major role in the synthesis of nucleoside triphosphates other than ATP. The ATP gamma phosphate is transferred to the NDP beta phosphate via a ping-pong mechanism, using a phosphorylated active-site intermediate. The protein is Nucleoside diphosphate kinase of Alkalilimnicola ehrlichii (strain ATCC BAA-1101 / DSM 17681 / MLHE-1).